Reading from the N-terminus, the 257-residue chain is Uxu operon transcriptional regulator (257 aa).

In terms of domain architecture, HTH gntR-type spans 8 to 76 (QRPYQEVGAM…RGAGIYVLDN (69 aa)). The H-T-H motif DNA-binding region spans 36–55 (EREIAEMLDVTRTVVREALI).

Its function is as follows. Repressor for the uxuRBA operon. This Escherichia coli (strain K12) protein is Uxu operon transcriptional regulator (uxuR).